The primary structure comprises 888 residues: Valine--tRNA ligase (888 aa).

Residues 43 to 53 (PFTSGTLHLGH) carry the 'HIGH' region motif. Positions 534–538 (KMSKS) match the 'KMSKS' region motif. ATP is bound at residue lysine 537.

This sequence belongs to the class-I aminoacyl-tRNA synthetase family. ValS type 2 subfamily.

It localises to the cytoplasm. It carries out the reaction tRNA(Val) + L-valine + ATP = L-valyl-tRNA(Val) + AMP + diphosphate. Catalyzes the attachment of valine to tRNA(Val). As ValRS can inadvertently accommodate and process structurally similar amino acids such as threonine, to avoid such errors, it has a 'posttransfer' editing activity that hydrolyzes mischarged Thr-tRNA(Val) in a tRNA-dependent manner. This Thermococcus kodakarensis (strain ATCC BAA-918 / JCM 12380 / KOD1) (Pyrococcus kodakaraensis (strain KOD1)) protein is Valine--tRNA ligase.